Consider the following 428-residue polypeptide: Tyrosine--tRNA ligase (428 aa).

Tyr41 contributes to the L-tyrosine binding site. Residues 46–55 carry the 'HIGH' region motif; the sequence is PTADSLHLGH. The L-tyrosine site is built by Tyr179 and Gln183. The 'KMSKS' region motif lies at 239–243; that stretch reads KFGKT. Lys242 serves as a coordination point for ATP. Residues 361-418 enclose the S4 RNA-binding domain; sequence ADLLQALVDSELQPSRGQARKTVASNAVTINGEKQADPEYVFSDSDRLFGRYTLLRRG.

Belongs to the class-I aminoacyl-tRNA synthetase family. TyrS type 1 subfamily. As to quaternary structure, homodimer.

The protein resides in the cytoplasm. The enzyme catalyses tRNA(Tyr) + L-tyrosine + ATP = L-tyrosyl-tRNA(Tyr) + AMP + diphosphate + H(+). Its function is as follows. Catalyzes the attachment of tyrosine to tRNA(Tyr) in a two-step reaction: tyrosine is first activated by ATP to form Tyr-AMP and then transferred to the acceptor end of tRNA(Tyr). In Klebsiella pneumoniae subsp. pneumoniae (strain ATCC 700721 / MGH 78578), this protein is Tyrosine--tRNA ligase.